The primary structure comprises 464 residues: Protein FAM90A26 (464 aa).

Disordered regions lie at residues 1-42, 70-293, 312-390, and 410-442; these read MMAC…DPRL, PPTL…AKRP, PFQI…DGAQ, and AAPS…VRVP. Basic and acidic residues-rich tracts occupy residues 74 to 83 and 97 to 114; these read GKKEGKENLK and NKDK…DPQR. Over residues 178 to 197 the composition is skewed to low complexity; that stretch reads SALASLSPLRKASLSSSSSL.

Belongs to the FAM90 family.

This Homo sapiens (Human) protein is Protein FAM90A26.